Consider the following 426-residue polypeptide: 6-Hydroxy-7-prenyldeoxybrevianamide E synthase notC' (426 aa).

Glutamate 94 is a substrate binding site. Dimethylallyl diphosphate-binding residues include arginine 105, lysine 191, and tyrosine 193. A substrate-binding site is contributed by tyrosine 195. Dimethylallyl diphosphate contacts are provided by lysine 267, tyrosine 269, glutamine 352, tyrosine 354, tyrosine 418, and tyrosine 422.

The protein belongs to the tryptophan dimethylallyltransferase family.

The catalysed reaction is 6-hydroxydeoxybrevianamide E + dimethylallyl diphosphate = notoamide S + diphosphate. The protein operates within alkaloid biosynthesis. Prenyltransferase; part of the gene cluster that mediates the biosynthesis of notoamide, a fungal indole alkaloid that belongs to a family of natural products containing a characteristic bicyclo[2.2.2]diazaoctane core. The first step of notoamide biosynthesis involves coupling of L-proline and L-tryptophan by the bimodular NRPS notE', to produce cyclo-L-tryptophan-L-proline called brevianamide F. The reverse prenyltransferase notF' then acts as a deoxybrevianamide E synthase and converts brevianamide F to deoxybrevianamide E via reverse prenylation at C-2 of the indole ring leading to the bicyclo[2.2.2]diazaoctane core. Deoxybrevianamide E is further hydroxylated at C-6 of the indole ring, likely catalyzed by the cytochrome P450 monooxygenase notG', to yield 6-hydroxy-deoxybrevianamide E. 6-hydroxy-deoxybrevianamide E is a specific substrate of the prenyltransferase notC' for normal prenylation at C-7 to produce 6-hydroxy-7-prenyl-deoxybrevianamide, also called notoamide S. As the proposed pivotal branching point in notoamide biosynthesis, notoamide S can be diverted to notoamide E through an oxidative pyran ring closure putatively catalyzed by either notH' cytochrome P450 monooxygenase or the notD' FAD-linked oxidoreductase. This step would be followed by an indole 2,3-epoxidation-initiated pinacol-like rearrangement catalyzed by the notB' FAD-dependent monooxygenase leading to the formation of notoamide C and notoamide D. On the other hand notoamide S is converted to notoamide T by notH' (or notD'), a bifunctional oxidase that also functions as the intramolecular Diels-Alderase responsible for generation of (-)-notoamide T. To generate antipodal (+)-notoaminide T, notH (or notD) in Aspergillus strain MF297-2 is expected to catalyze a Diels-Alder reaction leading to the opposite stereochemistry. The remaining oxidoreductase notD' (or notH') likely catalyzes the oxidative pyran ring formation to yield (-)-stephacidin A. The FAD-dependent monooxygenase notI' is highly similar to notB' and is predicted to catalyze a similar conversion from (-)-stephacidin A to (+)-notoamide B via the 2,3-epoxidation of (-)-stephacidin A followed by a pinacol-type rearrangement. Finally, it remains unclear which enzyme could be responsible for the final hydroxylation steps leading to notoamide A and sclerotiamide. The sequence is that of 6-Hydroxy-7-prenyldeoxybrevianamide E synthase notC' from Aspergillus versicolor.